Reading from the N-terminus, the 266-residue chain is Dihydropteroate synthase (266 aa).

One can recognise a Pterin-binding domain in the interval 12 to 260 (AAIMGILNVT…DVKANQDIVA (249 aa)). Asparagine 19 contacts Mg(2+). Residues threonine 59, aspartate 93, asparagine 112, aspartate 176, lysine 212, and 248–250 (RVH) contribute to the (7,8-dihydropterin-6-yl)methyl diphosphate site.

The protein belongs to the DHPS family. In terms of assembly, homodimer or homotrimer. It depends on Mg(2+) as a cofactor.

It carries out the reaction (7,8-dihydropterin-6-yl)methyl diphosphate + 4-aminobenzoate = 7,8-dihydropteroate + diphosphate. It participates in cofactor biosynthesis; tetrahydrofolate biosynthesis; 7,8-dihydrofolate from 2-amino-4-hydroxy-6-hydroxymethyl-7,8-dihydropteridine diphosphate and 4-aminobenzoate: step 1/2. Catalyzes the condensation of para-aminobenzoate (pABA) with 6-hydroxymethyl-7,8-dihydropterin diphosphate (DHPt-PP) to form 7,8-dihydropteroate (H2Pte), the immediate precursor of folate derivatives. In Streptococcus pyogenes serotype M3 (strain ATCC BAA-595 / MGAS315), this protein is Dihydropteroate synthase (folP).